A 410-amino-acid chain; its full sequence is Tryptophan synthase beta chain (410 aa).

An N6-(pyridoxal phosphate)lysine modification is found at Lys-104.

The protein belongs to the TrpB family. In terms of assembly, tetramer of two alpha and two beta chains. Pyridoxal 5'-phosphate is required as a cofactor.

The catalysed reaction is (1S,2R)-1-C-(indol-3-yl)glycerol 3-phosphate + L-serine = D-glyceraldehyde 3-phosphate + L-tryptophan + H2O. The protein operates within amino-acid biosynthesis; L-tryptophan biosynthesis; L-tryptophan from chorismate: step 5/5. Its function is as follows. The beta subunit is responsible for the synthesis of L-tryptophan from indole and L-serine. The chain is Tryptophan synthase beta chain from Thermosynechococcus vestitus (strain NIES-2133 / IAM M-273 / BP-1).